Here is a 161-residue protein sequence, read N- to C-terminus: Nucleotide-binding protein PSEEN4469 (161 aa).

Belongs to the YajQ family.

Nucleotide-binding protein. The polypeptide is Nucleotide-binding protein PSEEN4469 (Pseudomonas entomophila (strain L48)).